Consider the following 365-residue polypeptide: 3-dehydroquinate synthase (365 aa).

NAD(+) is bound by residues 69-74 (DGEAHK), 103-107 (GVIGD), 127-128 (TT), K140, and K149. Zn(2+) contacts are provided by E182, H245, and H262.

It belongs to the sugar phosphate cyclases superfamily. Dehydroquinate synthase family. The cofactor is NAD(+). Co(2+) is required as a cofactor. Requires Zn(2+) as cofactor.

It is found in the cytoplasm. It catalyses the reaction 7-phospho-2-dehydro-3-deoxy-D-arabino-heptonate = 3-dehydroquinate + phosphate. It participates in metabolic intermediate biosynthesis; chorismate biosynthesis; chorismate from D-erythrose 4-phosphate and phosphoenolpyruvate: step 2/7. Catalyzes the conversion of 3-deoxy-D-arabino-heptulosonate 7-phosphate (DAHP) to dehydroquinate (DHQ). This chain is 3-dehydroquinate synthase, found in Pseudomonas putida (strain ATCC 47054 / DSM 6125 / CFBP 8728 / NCIMB 11950 / KT2440).